We begin with the raw amino-acid sequence, 66 residues long: Stress-induced protein KIN2 (66 aa).

The segment covering 1-10 (MSETNKNAFQ) has biased composition (polar residues). The segment at 1–20 (MSETNKNAFQAGQAAGKAEE) is disordered. Repeats lie at residues 31 to 35 (DAAAA) and 49 to 53 (DAAVG).

In terms of assembly, interacts with DEK3. In terms of tissue distribution, expressed at high levels in embryos and mature seeds.

This Arabidopsis thaliana (Mouse-ear cress) protein is Stress-induced protein KIN2.